The primary structure comprises 119 residues: Large ribosomal subunit protein bL20 (119 aa).

This sequence belongs to the bacterial ribosomal protein bL20 family.

Functionally, binds directly to 23S ribosomal RNA and is necessary for the in vitro assembly process of the 50S ribosomal subunit. It is not involved in the protein synthesizing functions of that subunit. This Teredinibacter turnerae (strain ATCC 39867 / T7901) protein is Large ribosomal subunit protein bL20.